We begin with the raw amino-acid sequence, 155 residues long: SsrA-binding protein (155 aa).

This sequence belongs to the SmpB family.

The protein localises to the cytoplasm. Required for rescue of stalled ribosomes mediated by trans-translation. Binds to transfer-messenger RNA (tmRNA), required for stable association of tmRNA with ribosomes. tmRNA and SmpB together mimic tRNA shape, replacing the anticodon stem-loop with SmpB. tmRNA is encoded by the ssrA gene; the 2 termini fold to resemble tRNA(Ala) and it encodes a 'tag peptide', a short internal open reading frame. During trans-translation Ala-aminoacylated tmRNA acts like a tRNA, entering the A-site of stalled ribosomes, displacing the stalled mRNA. The ribosome then switches to translate the ORF on the tmRNA; the nascent peptide is terminated with the 'tag peptide' encoded by the tmRNA and targeted for degradation. The ribosome is freed to recommence translation, which seems to be the essential function of trans-translation. The protein is SsrA-binding protein of Moorella thermoacetica (strain ATCC 39073 / JCM 9320).